The chain runs to 283 residues: Pantothenate synthetase (283 aa).

30–37 (MGALHEGH) is an ATP binding site. His37 acts as the Proton donor in catalysis. (R)-pantoate is bound at residue Gln61. Gln61 provides a ligand contact to beta-alanine. 147 to 150 (GMKD) is an ATP binding site. Gln153 serves as a coordination point for (R)-pantoate. ATP contacts are provided by residues Val176 and 184–187 (LSSR).

Belongs to the pantothenate synthetase family. As to quaternary structure, homodimer.

It is found in the cytoplasm. It carries out the reaction (R)-pantoate + beta-alanine + ATP = (R)-pantothenate + AMP + diphosphate + H(+). The protein operates within cofactor biosynthesis; (R)-pantothenate biosynthesis; (R)-pantothenate from (R)-pantoate and beta-alanine: step 1/1. Its function is as follows. Catalyzes the condensation of pantoate with beta-alanine in an ATP-dependent reaction via a pantoyl-adenylate intermediate. This Endomicrobium trichonymphae protein is Pantothenate synthetase.